The following is a 130-amino-acid chain: Small ribosomal subunit protein uS9 (130 aa).

It belongs to the universal ribosomal protein uS9 family.

In Pseudomonas fluorescens (strain ATCC BAA-477 / NRRL B-23932 / Pf-5), this protein is Small ribosomal subunit protein uS9.